Here is a 1088-residue protein sequence, read N- to C-terminus: MALHFQSLAELEVLCTHLYIGTDLTQRIEAEKALLELIDSPECLSKCQLLLEQGTTSYAQLLAATCLSKLVSRVSPLPVEQRMDIRNYILNYVASQPKLAPFVIQALIQVIAKITKLGWFEVQKDQFVFREIIADVKKFLQGTVEHCIIGVIILSELTQEMNLVDYSRPSAKHRKIATSFRDTSLKDVLVLACSLLKEVFAKPLNLQDQCQQNLVMQVLKLVLNCLNFDFIGSSADESADDLCTVQIPTTWRTIFLEPETLDLFFNLYHSLPPLLSQLALSCLVQFASTRRSLFNSPERAKYLGNLIKGVKRILENPQGLSDPGNYHEFCRFLARLKTNYQLGELVMVKEYPEVIRLIANFTITSLQHWEFAPNSVHYLLTLWQRMVASVPFVKSTEPHLLDTYAPEITKAFITSRLDSVAIVVRDHLDDPLDDTATVFQQLEQLCTVSRCEYEKTCALLVQLFDQNAQNYQKLLHPYSGVTVDITIQEGRLAWLVYLVGTVVGGRLTYTSTDEHDAMDGELSCRVFQLISLMDTGLPRCCNEKIELAILWFLDQFRKTYVGDQLQRTSKVYARMSEVLGITDDNHVLETFMTKIVTNLKYWGRYEPVISRTLQFLNDLSVGYILLKKLVKIDAVKFMLKNHTSEHFPFLGISDNHSLSDFRCRTTFYTALTRLLMVDLGEDEDEFENFMLPLTVAFETVLQIFNNNFKQEDVKRMLIGLARDLRGIAFALNTKTSYTMLFDWMYPTYLPLLQNAVERWYGEPTCTTPILKLMAELMQNRSQRLNFDVSSPNGILLFREASKMVCTYGNQILSLGSLSKDQIYPMKLKGISICYSALKSALCGNYVSFGVFKLYGDNHFDNVLQAFVKMLLSVSHSDLLQYRKLSQSYYPLLECLTQDHMSFIINLEPPVLMYVLTSISEGLTTLDTVVSSSCCTSLDYIVTYLFKHIAKEGKKPLRCREATQAGQRLLHFMQQNPDVLQQMMSVLMNTIVFEDCRNQWSVSRPLLGLILLNEKYFSELRASLINSQPLPKQEVLAQCFRNLMEGVEQNLSVKNRDRFTQNLSVFRRDVAEALRSDGNTEPCSLDMMS.

Ala-2 carries the N-acetylalanine modification. Ser-569 bears the Phosphoserine mark.

It belongs to the exportin family. As to quaternary structure, binds to nucleoporins and the GTP-bound form of Ran. Highly expressed in testis, moderately in pancreas and weakly in other tissues studied.

The protein localises to the cytoplasm. Its subcellular location is the nucleus. It is found in the nuclear pore complex. Functionally, may function as a nuclear transport receptor. This chain is Ran-binding protein 17 (RANBP17), found in Homo sapiens (Human).